The sequence spans 396 residues: Elongation factor Tu (396 aa).

The 195-residue stretch at 11-205 folds into the tr-type G domain; it reads KPHVNIGTIG…VIDDYIPTPK (195 aa). The segment at 20 to 27 is G1; sequence GHVDHGKT. 20-27 is a GTP binding site; sequence GHVDHGKT. A Mg(2+)-binding site is contributed by T27. The segment at 61–65 is G2; that stretch reads GITIN. The segment at 82–85 is G3; sequence DAPG. GTP contacts are provided by residues 82-86 and 137-140; these read DAPGH and NKTD. The G4 stretch occupies residues 137–140; sequence NKTD. The tract at residues 175–177 is G5; sequence SAL.

The protein belongs to the TRAFAC class translation factor GTPase superfamily. Classic translation factor GTPase family. EF-Tu/EF-1A subfamily. In terms of assembly, monomer.

Its subcellular location is the cytoplasm. It carries out the reaction GTP + H2O = GDP + phosphate + H(+). Functionally, GTP hydrolase that promotes the GTP-dependent binding of aminoacyl-tRNA to the A-site of ribosomes during protein biosynthesis. The protein is Elongation factor Tu of Limosilactobacillus reuteri (strain DSM 20016) (Lactobacillus reuteri).